The sequence spans 275 residues: 2-dehydro-3-deoxyphosphooctonate aldolase (275 aa).

Belongs to the KdsA family.

It is found in the cytoplasm. The enzyme catalyses D-arabinose 5-phosphate + phosphoenolpyruvate + H2O = 3-deoxy-alpha-D-manno-2-octulosonate-8-phosphate + phosphate. It functions in the pathway carbohydrate biosynthesis; 3-deoxy-D-manno-octulosonate biosynthesis; 3-deoxy-D-manno-octulosonate from D-ribulose 5-phosphate: step 2/3. It participates in bacterial outer membrane biogenesis; lipopolysaccharide biosynthesis. The protein is 2-dehydro-3-deoxyphosphooctonate aldolase of Protochlamydia amoebophila (strain UWE25).